Reading from the N-terminus, the 553-residue chain is MTPAALAELLRNTAVDVLASRDLDTSVIPAAVTVERPRNPEHGDYATNIAMQVAKKAGVAPRDLAGWLAEALTGQDGIDSVEVAGPGFLNLRLAADAQGQILREVLDATDAYGRGAKYQGLKVNLEFVSANPTGPVHLGGTRWAAVGDALGRTLEAQGAEVTREYYFNDAGAQIDRFVRSLIAAARGEAAPEDGYGGAYIGEIANQVLEAEPTALDLPEAERHETFRRIGVGLMFDEVKRSLHDFGVDFDVYFHEDSLHTSGAVEKSVEQLKESGHLYFADGAWWLRSTEFGDDKDRVLIKSDGTTAYIAGDVAYLRDKRNRGFDLCIYMLGADHHGYIPRLKAAAAAFDDDPDAVEVLIGQMVNLVKDGKPVRMSKRAGTVLRLEDLVDAVGVDAARYSLIRSSVDSALDIDLDLISKRSNENPVFYVQYAHARLSSLQRNAASLGIDRGSVADADLSLLTHEREGDLIRTLGEYPRVVRSAAELREPHRIARYLEDLASAYHKFYDACRVLQPGDDQATPLTIARLQLCEAARQVLANGLGLLGVSAPEQM.

The 'HIGH' region motif lies at 130 to 140 (ANPTGPVHLGG).

The protein belongs to the class-I aminoacyl-tRNA synthetase family. In terms of assembly, monomer.

It is found in the cytoplasm. The enzyme catalyses tRNA(Arg) + L-arginine + ATP = L-arginyl-tRNA(Arg) + AMP + diphosphate. The sequence is that of Arginine--tRNA ligase from Saccharopolyspora erythraea (strain ATCC 11635 / DSM 40517 / JCM 4748 / NBRC 13426 / NCIMB 8594 / NRRL 2338).